The chain runs to 282 residues: Bifunctional protein FolD (282 aa).

NADP(+) is bound by residues 165–167, serine 190, and threonine 231; that span reads GRS.

Belongs to the tetrahydrofolate dehydrogenase/cyclohydrolase family. In terms of assembly, homodimer.

It catalyses the reaction (6R)-5,10-methylene-5,6,7,8-tetrahydrofolate + NADP(+) = (6R)-5,10-methenyltetrahydrofolate + NADPH. It carries out the reaction (6R)-5,10-methenyltetrahydrofolate + H2O = (6R)-10-formyltetrahydrofolate + H(+). It functions in the pathway one-carbon metabolism; tetrahydrofolate interconversion. In terms of biological role, catalyzes the oxidation of 5,10-methylenetetrahydrofolate to 5,10-methenyltetrahydrofolate and then the hydrolysis of 5,10-methenyltetrahydrofolate to 10-formyltetrahydrofolate. The polypeptide is Bifunctional protein FolD (Clostridium beijerinckii (strain ATCC 51743 / NCIMB 8052) (Clostridium acetobutylicum)).